Here is a 309-residue protein sequence, read N- to C-terminus: Olfactory receptor 7A10 (309 aa).

The Extracellular portion of the chain corresponds to M1–A25. N-linked (GlcNAc...) asparagine glycosylation occurs at N5. A helical membrane pass occupies residues F26–I46. At L47 to H54 the chain is on the cytoplasmic side. A helical transmembrane segment spans residues L55–S75. At T76–T99 the chain is on the extracellular side. Cysteines 97 and 189 form a disulfide. A helical transmembrane segment spans residues Q100 to Y120. Residues D121–Q139 are Cytoplasmic-facing. Residues L140–S160 form a helical membrane-spanning segment. The Extracellular portion of the chain corresponds to L161–I197. The helical transmembrane segment at V198–S217 threads the bilayer. The Cytoplasmic portion of the chain corresponds to Y218–A237. A helical transmembrane segment spans residues F238–V258. Over Y259 to G271 the chain is Extracellular. A helical membrane pass occupies residues A272–L292. The Cytoplasmic portion of the chain corresponds to R293 to Q309.

Belongs to the G-protein coupled receptor 1 family.

Its subcellular location is the cell membrane. Its function is as follows. Odorant receptor. The chain is Olfactory receptor 7A10 (OR7A10) from Homo sapiens (Human).